The following is a 132-amino-acid chain: MTMTDPIADFLTRLRNANSAYHDEVTLPHSKLKANIAQILKNEGYISDFRTEDARVGKSLIVQLKYGPSRERSIAGLRRVSKPGLRVYAKSTNLPRVLGGLGVAIISTSSGLLTDRQAARQGVGGEVLAYVW.

Belongs to the universal ribosomal protein uS8 family. As to quaternary structure, part of the 30S ribosomal subunit. Contacts proteins S5 and S12.

In terms of biological role, one of the primary rRNA binding proteins, it binds directly to 16S rRNA central domain where it helps coordinate assembly of the platform of the 30S subunit. This chain is Small ribosomal subunit protein uS8, found in Mycobacterium avium (strain 104).